A 249-amino-acid chain; its full sequence is uncharacterized protein (249 aa).

The 68-residue stretch at 4-71 (VRINKFLSEA…RKRYIILNKP (68 aa)) folds into the S4 RNA-binding domain. Aspartate 106 serves as the catalytic Nucleophile.

It belongs to the pseudouridine synthase RsuA family.

It carries out the reaction a uridine in RNA = a pseudouridine in RNA. This is an uncharacterized protein from Aquifex aeolicus (strain VF5).